The following is a 306-amino-acid chain: tRNA pseudouridine synthase B (306 aa).

Aspartate 48 acts as the Nucleophile in catalysis.

It belongs to the pseudouridine synthase TruB family. Type 1 subfamily.

The enzyme catalyses uridine(55) in tRNA = pseudouridine(55) in tRNA. In terms of biological role, responsible for synthesis of pseudouridine from uracil-55 in the psi GC loop of transfer RNAs. The protein is tRNA pseudouridine synthase B of Ectopseudomonas mendocina (strain ymp) (Pseudomonas mendocina).